A 435-amino-acid chain; its full sequence is Trigger factor (435 aa).

Residues 162 to 247 form the PPIase FKBP-type domain; that stretch reads GDRINIDYRG…LSGVESSKLP (86 aa).

Belongs to the FKBP-type PPIase family. Tig subfamily.

The protein resides in the cytoplasm. It catalyses the reaction [protein]-peptidylproline (omega=180) = [protein]-peptidylproline (omega=0). In terms of biological role, involved in protein export. Acts as a chaperone by maintaining the newly synthesized protein in an open conformation. Functions as a peptidyl-prolyl cis-trans isomerase. This chain is Trigger factor, found in Nitrosospira multiformis (strain ATCC 25196 / NCIMB 11849 / C 71).